The chain runs to 102 residues: ATP-dependent Clp protease adapter protein ClpS (102 aa).

The span at 1-18 shows a compositional bias: basic and acidic residues; it reads MSQFDHQHLSDTEEKQEL. Residues 1–21 are disordered; that stretch reads MSQFDHQHLSDTEEKQELKPP.

It belongs to the ClpS family. In terms of assembly, binds to the N-terminal domain of the chaperone ClpA.

Involved in the modulation of the specificity of the ClpAP-mediated ATP-dependent protein degradation. In Idiomarina loihiensis (strain ATCC BAA-735 / DSM 15497 / L2-TR), this protein is ATP-dependent Clp protease adapter protein ClpS.